We begin with the raw amino-acid sequence, 214 residues long: Acyl-homoserine-lactone synthase (214 aa).

This sequence belongs to the autoinducer synthase family.

The enzyme catalyses a fatty acyl-[ACP] + S-adenosyl-L-methionine = an N-acyl-L-homoserine lactone + S-methyl-5'-thioadenosine + holo-[ACP] + H(+). In terms of biological role, required for the synthesis of autoinducer molecules such as OHHL (N-(3-oxohexanoyl)-L-homoserine lactone), and HHL (N-hexanoyl-L-homoserine lactone). The sequence is that of Acyl-homoserine-lactone synthase (yenI) from Yersinia enterocolitica.